The chain runs to 430 residues: Probable aspartic-type endopeptidase ARB_07403 (430 aa).

Positions Met-1–Ser-17 are cleaved as a signal peptide. A propeptide spans Lys-18 to Glu-87 (activation peptide). Residues Tyr-66–His-105 are disordered. The segment covering Glu-87 to Glu-97 has biased composition (basic and acidic residues). Residues Phe-109–Ala-427 form the Peptidase A1 domain. Asp-125 is a catalytic residue. A glycan (N-linked (GlcNAc...) asparagine) is linked at Asn-306. Residue Asp-314 is part of the active site.

Belongs to the peptidase A1 family.

It localises to the secreted. In terms of biological role, probable secreted aspartic-type endopeptidase which contributes to virulence. This chain is Probable aspartic-type endopeptidase ARB_07403, found in Arthroderma benhamiae (strain ATCC MYA-4681 / CBS 112371) (Trichophyton mentagrophytes).